The following is a 155-amino-acid chain: Cytochrome c-type biogenesis protein CcmE (155 aa).

Over 1–8 (MNPIRKKR) the chain is Cytoplasmic. Residues 9–29 (LYWILALLCGVSIAMALALSA) form a helical; Signal-anchor for type II membrane protein membrane-spanning segment. The Periplasmic segment spans residues 30–155 (LQENINLFYT…PKRVKQESTR (126 aa)). Heme contacts are provided by H124 and Y128.

This sequence belongs to the CcmE/CycJ family.

It localises to the cell inner membrane. Its function is as follows. Heme chaperone required for the biogenesis of c-type cytochromes. Transiently binds heme delivered by CcmC and transfers the heme to apo-cytochromes in a process facilitated by CcmF and CcmH. The protein is Cytochrome c-type biogenesis protein CcmE of Janthinobacterium sp. (strain Marseille) (Minibacterium massiliensis).